The primary structure comprises 165 residues: Pyruvoyl-dependent arginine decarboxylase 1 (165 aa).

Pyruvic acid (Ser) is present on Ser45.

The protein belongs to the PdaD family. The cofactor is pyruvate.

The enzyme catalyses L-arginine + H(+) = agmatine + CO2. In Methanosarcina acetivorans (strain ATCC 35395 / DSM 2834 / JCM 12185 / C2A), this protein is Pyruvoyl-dependent arginine decarboxylase 1 (pdaD1).